The sequence spans 590 residues: Aspartate--tRNA(Asp/Asn) ligase (590 aa).

An L-aspartate-binding site is contributed by Glu175. The segment at 199-202 is aspartate; sequence QQYK. Residues Arg221 and His450 each contribute to the L-aspartate site. 221–223 provides a ligand contact to ATP; it reads RDE. Glu484 provides a ligand contact to ATP. Position 491 (Arg491) interacts with L-aspartate. Residue 536 to 539 participates in ATP binding; it reads GVDR.

The protein belongs to the class-II aminoacyl-tRNA synthetase family. Type 1 subfamily. In terms of assembly, homodimer.

The protein resides in the cytoplasm. It catalyses the reaction tRNA(Asx) + L-aspartate + ATP = L-aspartyl-tRNA(Asx) + AMP + diphosphate. Functionally, aspartyl-tRNA synthetase with relaxed tRNA specificity since it is able to aspartylate not only its cognate tRNA(Asp) but also tRNA(Asn). Reaction proceeds in two steps: L-aspartate is first activated by ATP to form Asp-AMP and then transferred to the acceptor end of tRNA(Asp/Asn). This Bradyrhizobium sp. (strain ORS 278) protein is Aspartate--tRNA(Asp/Asn) ligase.